Here is a 158-residue protein sequence, read N- to C-terminus: UPF0725 protein At3g57210 (158 aa).

This sequence belongs to the UPF0725 (EMB2204) family.

This Arabidopsis thaliana (Mouse-ear cress) protein is UPF0725 protein At3g57210.